The chain runs to 373 residues: Indole glucosinolate O-methyltransferase 1 (373 aa).

Gly217, Asp240, Asp260, Met261, and Lys274 together coordinate S-adenosyl-L-homocysteine. His278 functions as the Proton acceptor in the catalytic mechanism.

This sequence belongs to the class I-like SAM-binding methyltransferase superfamily. Cation-independent O-methyltransferase family. In terms of assembly, interacts with B'GAMMA.

It functions in the pathway secondary metabolite biosynthesis. In terms of biological role, involved in indole glucosinolate biosynthesis. Catalyzes methoxylation reactions of the glucosinolate indole ring. Converts the hydroxy intermediates 4-hydroxy-indol-3-yl-methylglucosinolate (4OH-I3M) and 1-hydroxy-indol-3-yl-methylglucosinolate (1OH-I3M) to 4-methoxy-indol-3-yl-methylglucosinolate (4MO-I3M) and 1-methoxy-indol-3-yl-methylglucosinolate (1MO-I3M), respectively. This is Indole glucosinolate O-methyltransferase 1 from Arabidopsis thaliana (Mouse-ear cress).